The primary structure comprises 90 residues: U7-theraphotoxin-Hhn1k (90 aa).

The first 19 residues, 1-19, serve as a signal peptide directing secretion; the sequence is MKTAIFTVVLALAVFAVLS. The propeptide occupies 20 to 50; that stretch reads FGWEANEKALSEEFTELIHEKEAASETEARE. Disulfide bonds link cysteine 51–cysteine 65 and cysteine 58–cysteine 70.

This sequence belongs to the neurotoxin 10 (Hwtx-1) family. 13 (Hntx-13) subfamily. Expressed by the venom gland.

It is found in the secreted. Its function is as follows. Ion channel inhibitor. This is U7-theraphotoxin-Hhn1k from Cyriopagopus hainanus (Chinese bird spider).